A 582-amino-acid chain; its full sequence is 2-succinyl-5-enolpyruvyl-6-hydroxy-3-cyclohexene-1-carboxylate synthase (582 aa).

The protein belongs to the TPP enzyme family. MenD subfamily. In terms of assembly, homodimer. The cofactor is Mg(2+). Mn(2+) is required as a cofactor. Thiamine diphosphate serves as cofactor.

The enzyme catalyses isochorismate + 2-oxoglutarate + H(+) = 5-enolpyruvoyl-6-hydroxy-2-succinyl-cyclohex-3-ene-1-carboxylate + CO2. The protein operates within quinol/quinone metabolism; 1,4-dihydroxy-2-naphthoate biosynthesis; 1,4-dihydroxy-2-naphthoate from chorismate: step 2/7. It participates in quinol/quinone metabolism; menaquinone biosynthesis. In terms of biological role, catalyzes the thiamine diphosphate-dependent decarboxylation of 2-oxoglutarate and the subsequent addition of the resulting succinic semialdehyde-thiamine pyrophosphate anion to isochorismate to yield 2-succinyl-5-enolpyruvyl-6-hydroxy-3-cyclohexene-1-carboxylate (SEPHCHC). The sequence is that of 2-succinyl-5-enolpyruvyl-6-hydroxy-3-cyclohexene-1-carboxylate synthase from Chlorobaculum tepidum (strain ATCC 49652 / DSM 12025 / NBRC 103806 / TLS) (Chlorobium tepidum).